The primary structure comprises 418 residues: Multidrug resistance protein MdtG (418 aa).

A run of 11 helical transmembrane segments spans residues 19–39 (IGCF…PLYV), 56–76 (LVFS…GGLA), 90–110 (LGMA…QFLI), 113–133 (ALLG…ATQI), 144–164 (TLST…GVLA), 171–191 (PVFF…LLFI), 222–242 (LFVT…ILTL), 251–271 (VANI…AALI), 288–308 (ILIA…FVQT), 317–337 (FLLG…LVYN), and 376–396 (AVFL…GLSL).

This sequence belongs to the major facilitator superfamily. DHA1 family. MdtG (TC 2.A.1.2.20) subfamily.

The protein localises to the cell inner membrane. This chain is Multidrug resistance protein MdtG, found in Enterobacter lignolyticus (strain SCF1).